The following is a 350-amino-acid chain: MIKKAIARVVEREDLSQSEMIQVMDQIMSGEATPAQIAAFITALRMKGETVAEIAGAARVMRDRATRIRVGKNVLDLDRDDINIDLETILDVVGTGGDGTNTFNISTTVSFVVAACGVKVAKHGNRSVSSACGSADVVEALGISLEVTPETVENCINEAGIGFLYAPALHGAMKFAIGPRKEIGIRTIFNILGPLTNPAGAPCQVLGVYREELVEKLAHVLKNLGCRRGFVVYGMDGMDEITLTTETRMAEVTPEEVKAWLFKPEDLGFARCTMDDLRGGDAVANAVTVRGILEGEKGPKRDVVLINAAFGLVAAGRAANPAEGVKLAVEALDSGAALAKLEKLKALTNA.

Residues Gly94, 97–98 (GD), Thr102, 104–107 (NIST), 122–130 (KHGNRSVSS), and Ser134 each bind 5-phospho-alpha-D-ribose 1-diphosphate. Gly94 contributes to the anthranilate binding site. Ser106 is a Mg(2+) binding site. An anthranilate-binding site is contributed by Asn125. Arg180 lines the anthranilate pocket. Mg(2+) contacts are provided by Asp239 and Glu240.

Belongs to the anthranilate phosphoribosyltransferase family. In terms of assembly, homodimer. The cofactor is Mg(2+).

It catalyses the reaction N-(5-phospho-beta-D-ribosyl)anthranilate + diphosphate = 5-phospho-alpha-D-ribose 1-diphosphate + anthranilate. The protein operates within amino-acid biosynthesis; L-tryptophan biosynthesis; L-tryptophan from chorismate: step 2/5. Its function is as follows. Catalyzes the transfer of the phosphoribosyl group of 5-phosphorylribose-1-pyrophosphate (PRPP) to anthranilate to yield N-(5'-phosphoribosyl)-anthranilate (PRA). The sequence is that of Anthranilate phosphoribosyltransferase from Geotalea daltonii (strain DSM 22248 / JCM 15807 / FRC-32) (Geobacter daltonii).